The sequence spans 103 residues: Small ribosomal subunit protein uS10 (103 aa).

Belongs to the universal ribosomal protein uS10 family. As to quaternary structure, part of the 30S ribosomal subunit.

Its function is as follows. Involved in the binding of tRNA to the ribosomes. The protein is Small ribosomal subunit protein uS10 of Sulfurovum sp. (strain NBC37-1).